A 353-amino-acid chain; its full sequence is Photosystem II protein D1 (353 aa).

At T2 the chain carries N-acetylthreonine. T2 bears the Phosphothreonine mark. The next 3 helical transmembrane spans lie at 29–46, 118–133, and 142–156; these read YIGW…TATS, HFFI…EWEL, and WIAV…AATA. Residue H118 participates in chlorophyll a binding. Y126 lines the pheophytin a pocket. [CaMn4O5] cluster is bound by residues D170 and E189. The chain crosses the membrane as a helical span at residues 197–218; sequence FHMLGVAGVFGGSLFSAMHGSL. Chlorophyll a is bound at residue H198. A quinone-binding positions include H215 and 264–265; that span reads SF. H215 lines the Fe cation pocket. H272 serves as a coordination point for Fe cation. Residues 274-288 form a helical membrane-spanning segment; the sequence is FLAIWPVMGIWFTAL. [CaMn4O5] cluster-binding residues include H332, E333, D342, and A344. The propeptide occupies 345-353; the sequence is SVEAPSINA.

This sequence belongs to the reaction center PufL/M/PsbA/D family. As to quaternary structure, PSII is composed of 1 copy each of membrane proteins PsbA, PsbB, PsbC, PsbD, PsbE, PsbF, PsbH, PsbI, PsbJ, PsbK, PsbL, PsbM, PsbT, PsbX, PsbY, PsbZ, Psb30/Ycf12, at least 3 peripheral proteins of the oxygen-evolving complex and a large number of cofactors. It forms dimeric complexes. It depends on The D1/D2 heterodimer binds P680, chlorophylls that are the primary electron donor of PSII, and subsequent electron acceptors. It shares a non-heme iron and each subunit binds pheophytin, quinone, additional chlorophylls, carotenoids and lipids. D1 provides most of the ligands for the Mn4-Ca-O5 cluster of the oxygen-evolving complex (OEC). There is also a Cl(-1) ion associated with D1 and D2, which is required for oxygen evolution. The PSII complex binds additional chlorophylls, carotenoids and specific lipids. as a cofactor. Post-translationally, tyr-161 forms a radical intermediate that is referred to as redox-active TyrZ, YZ or Y-Z. C-terminally processed by CTPA; processing is essential to allow assembly of the oxygen-evolving complex and thus photosynthetic growth.

It is found in the plastid. The protein resides in the chloroplast thylakoid membrane. It carries out the reaction 2 a plastoquinone + 4 hnu + 2 H2O = 2 a plastoquinol + O2. Photosystem II (PSII) is a light-driven water:plastoquinone oxidoreductase that uses light energy to abstract electrons from H(2)O, generating O(2) and a proton gradient subsequently used for ATP formation. It consists of a core antenna complex that captures photons, and an electron transfer chain that converts photonic excitation into a charge separation. The D1/D2 (PsbA/PsbD) reaction center heterodimer binds P680, the primary electron donor of PSII as well as several subsequent electron acceptors. The chain is Photosystem II protein D1 from Ostreococcus tauri.